A 1050-amino-acid polypeptide reads, in one-letter code: Self-sufficient cytochrome P450 monooxygenase CYP505E3 (1050 aa).

C406 serves as a coordination point for heme. A compositionally biased stretch (polar residues) spans 459–481 (RGQSATGLSQGSMSASGATSSVA). Residues 459–495 (RGQSATGLSQGSMSASGATSSVASPGPPAATGAQSNP) are disordered. The Flavodoxin-like domain occupies 501 to 641 (ISFFYGSNSG…DLELWEETNL (141 aa)). Residues 507 to 511 (SNSGT) and 585 to 617 (VFGCGHHDWAKTFYRIPILIDDLMHKAGATRLT) each bind FMN. The 229-residue stretch at 679-907 (RGLVEAKVTA…RPAKDAFHLP (229 aa)) folds into the FAD-binding FR-type domain.

It in the N-terminal section; belongs to the cytochrome P450 family. It depends on FAD as a cofactor. The cofactor is FMN. Heme serves as cofactor.

It catalyses the reaction 2 oxidized [cytochrome P450] + NADPH = 2 reduced [cytochrome P450] + NADP(+) + H(+). The enzyme catalyses an organic molecule + reduced [NADPH--hemoprotein reductase] + O2 = an alcohol + oxidized [NADPH--hemoprotein reductase] + H2O + H(+). The catalysed reaction is decane + reduced [NADPH--hemoprotein reductase] + O2 = 3-decanol + oxidized [NADPH--hemoprotein reductase] + H2O + H(+). It carries out the reaction dodecane + reduced [NADPH--hemoprotein reductase] + O2 = 5-dodecanol + oxidized [NADPH--hemoprotein reductase] + H2O + H(+). It catalyses the reaction tetradecane + reduced [NADPH--hemoprotein reductase] + O2 = 7-tetradecanol + oxidized [NADPH--hemoprotein reductase] + H2O + H(+). The enzyme catalyses hexadecane + reduced [NADPH--hemoprotein reductase] + O2 = 9-hexadecanol + oxidized [NADPH--hemoprotein reductase] + H2O + H(+). The catalysed reaction is dodecanoate + reduced [NADPH--hemoprotein reductase] + O2 = 5-hydroxydodecanoate + oxidized [NADPH--hemoprotein reductase] + H2O + H(+). It carries out the reaction tetradecanoate + reduced [NADPH--hemoprotein reductase] + O2 = 7-hydroxytetradecanoate + oxidized [NADPH--hemoprotein reductase] + H2O + H(+). It catalyses the reaction hexadecanoate + reduced [NADPH--hemoprotein reductase] + O2 = 9-hydroxyhexadecanoate + oxidized [NADPH--hemoprotein reductase] + H2O + H(+). The enzyme catalyses decan-1-ol + reduced [NADPH--hemoprotein reductase] + O2 = 1,3-decanediol + oxidized [NADPH--hemoprotein reductase] + H2O + H(+). The catalysed reaction is decan-1-ol + reduced [NADPH--hemoprotein reductase] + O2 = 1,7-decanediol + oxidized [NADPH--hemoprotein reductase] + H2O + H(+). It carries out the reaction dodecan-1-ol + reduced [NADPH--hemoprotein reductase] + O2 = 1,5-dodecanediol + oxidized [NADPH--hemoprotein reductase] + H2O + H(+). It catalyses the reaction dodecan-1-ol + reduced [NADPH--hemoprotein reductase] + O2 = 1,4-dodecanediol + oxidized [NADPH--hemoprotein reductase] + H2O + H(+). The enzyme catalyses dodecan-1-ol + reduced [NADPH--hemoprotein reductase] + O2 = 1,6-dodecanediol + oxidized [NADPH--hemoprotein reductase] + H2O + H(+). Self-sufficient cytochrome P450 monooxygenase that catalyzes the regioselective in-chain hydroxylation of alkanes, fatty alcohols, and fatty acids at the omega-7 position. Performs hydroxylation of C10-C16 n-alkanes and C12 and C14 fatty alcohols; and thereby enables the one step biocatalytic synthesis of rare alcohols such as 5-dodecanol and 7-tetradecanol. Converts 1-dodecanol into 1,5-dodecanediol as major product with very little sub-terminally hydroxylated products with the 1,4-dodecanediol and 1,6-dodecanediol more abundant. Does not use hexadecanediol nor decanoic acid as substrates. Converts dodecanoic acid to 5-hydroxydodecanoic acid which can be further converted into delta-dodecalactone by lactonization of the 5-hydroxy acid at low pH. Also gives sub-terminal hydroxylation of dodecanoic acid with 9-hydroxydodecanoic acid being the second most abundant product. The C14 and C16 fatty acids are double hydroxylated to yield dihydroxy acids hydroxylated at both the omega-7 position and a sub-terminal position (omega-1, omega-2, or omega-3). The polypeptide is Self-sufficient cytochrome P450 monooxygenase CYP505E3 (Aspergillus terreus (strain NIH 2624 / FGSC A1156)).